The chain runs to 415 residues: Gamma-glutamyl phosphate reductase 1 (415 aa).

Belongs to the gamma-glutamyl phosphate reductase family.

It localises to the cytoplasm. It carries out the reaction L-glutamate 5-semialdehyde + phosphate + NADP(+) = L-glutamyl 5-phosphate + NADPH + H(+). Its pathway is amino-acid biosynthesis; L-proline biosynthesis; L-glutamate 5-semialdehyde from L-glutamate: step 2/2. Its function is as follows. Catalyzes the NADPH-dependent reduction of L-glutamate 5-phosphate into L-glutamate 5-semialdehyde and phosphate. The product spontaneously undergoes cyclization to form 1-pyrroline-5-carboxylate. This chain is Gamma-glutamyl phosphate reductase 1, found in Bacillus licheniformis (strain ATCC 14580 / DSM 13 / JCM 2505 / CCUG 7422 / NBRC 12200 / NCIMB 9375 / NCTC 10341 / NRRL NRS-1264 / Gibson 46).